Reading from the N-terminus, the 134-residue chain is Large ribosomal subunit protein bL20 (134 aa).

Belongs to the bacterial ribosomal protein bL20 family.

Binds directly to 23S ribosomal RNA and is necessary for the in vitro assembly process of the 50S ribosomal subunit. It is not involved in the protein synthesizing functions of that subunit. This is Large ribosomal subunit protein bL20 from Brucella abortus (strain S19).